We begin with the raw amino-acid sequence, 238 residues long: Ribosomal RNA small subunit methyltransferase G (238 aa).

S-adenosyl-L-methionine-binding positions include glycine 77, phenylalanine 82, 128–129 (AE), and arginine 147.

Belongs to the methyltransferase superfamily. RNA methyltransferase RsmG family.

It is found in the cytoplasm. Its function is as follows. Specifically methylates the N7 position of guanine in position 535 of 16S rRNA. The polypeptide is Ribosomal RNA small subunit methyltransferase G (Exiguobacterium sibiricum (strain DSM 17290 / CCUG 55495 / CIP 109462 / JCM 13490 / 255-15)).